A 255-amino-acid chain; its full sequence is Putative glutamine amidotransferase YafJ (255 aa).

Cysteine 2 acts as the For GATase activity in catalysis. Positions 2–251 (CELLGMSANV…PGEWRLFCLG (250 aa)) constitute a Glutamine amidotransferase type-2 domain.

This is Putative glutamine amidotransferase YafJ (yafJ) from Escherichia coli (strain K12).